The chain runs to 2198 residues: RNA-directed RNA polymerase L (2198 aa).

Residues 26-284 form an endonuclease region; sequence KEALLSQVEV…AHSDSLAPEC (259 aa). Residues glutamate 51, aspartate 89, and glutamate 102 each contribute to the Mn(2+) site. Lysine 115 is an active-site residue. Positions 1161–1359 constitute a RdRp catalytic domain; that stretch reads CDMKMAVNNG…FLSSKFNKFV (199 aa). Aspartate 1319 provides a ligand contact to Mg(2+).

Belongs to the Bunyavirales RNA polymerase family. As to quaternary structure, homomultimer; the oligomeric structure is essential for the polymerase activity. Interacts with nucleoprotein N. Interacts with protein Z; this interaction inhibits viral transcription and replication, Z partially blocks the product exit tunnel for the releasing nascent RNA product. Mn(2+) is required as a cofactor. Mg(2+) serves as cofactor.

It localises to the virion. The protein localises to the host cytoplasm. The catalysed reaction is RNA(n) + a ribonucleoside 5'-triphosphate = RNA(n+1) + diphosphate. RNA-dependent RNA polymerase, which is responsible for the replication and transcription of the viral RNA genome using antigenomic RNA as an intermediate. During transcription, synthesizes subgenomic RNAs and assures their capping by a cap-snatching mechanism, which involves the endonuclease activity cleaving the host capped pre-mRNAs. These short capped RNAs are then used as primers for viral transcription. The 3'-end of subgenomic mRNAs molecules are heterogeneous and not polyadenylated. The replicase function is to direct synthesis of antigenomic and genomic RNA which are encapsidated and non capped. As a consequence of the use of the same enzyme for both transcription and replication, these mechanisms need to be well coordinated. These processes may be regulated by proteins N and Z in a dose-dependent manner. Z protein inhibits the viral polymerase L und thus the viral transcription and RNA synthesis. In Homo sapiens (Human), this protein is RNA-directed RNA polymerase L.